Here is a 206-residue protein sequence, read N- to C-terminus: Small ribosomal subunit protein uS4 (206 aa).

Basic and acidic residues predominate over residues 25-39; it reads DKLLDRKPNGPGKER. The segment at 25–49 is disordered; the sequence is DKLLDRKPNGPGKERGARKRGKTSV. The S4 RNA-binding domain maps to 95–157; the sequence is QRLDNTIYRM…KGIQNLIRHN (63 aa).

This sequence belongs to the universal ribosomal protein uS4 family. In terms of assembly, part of the 30S ribosomal subunit. Contacts protein S5. The interaction surface between S4 and S5 is involved in control of translational fidelity.

One of the primary rRNA binding proteins, it binds directly to 16S rRNA where it nucleates assembly of the body of the 30S subunit. In terms of biological role, with S5 and S12 plays an important role in translational accuracy. The protein is Small ribosomal subunit protein uS4 of Treponema denticola (strain ATCC 35405 / DSM 14222 / CIP 103919 / JCM 8153 / KCTC 15104).